The chain runs to 96 residues: Large ribosomal subunit protein eL21 (96 aa).

Residues 1-22 form a disordered region; sequence MRKSKGFKSRSRYKLKRSIRPK.

The protein belongs to the eukaryotic ribosomal protein eL21 family.

This Methanosphaera stadtmanae (strain ATCC 43021 / DSM 3091 / JCM 11832 / MCB-3) protein is Large ribosomal subunit protein eL21.